Reading from the N-terminus, the 285-residue chain is Complex I assembly factor TIMMDC1, mitochondrial (285 aa).

A run of 4 helical transmembrane segments spans residues 80-100 (AAVSAGIIGWAYGGIPAFIYA), 137-159 (RWSWRTAVFVTIFNTVNTGLTVY), 165-185 (MSHFAIAGAVTGGLFRINLGV), and 188-208 (LVAGSIIGALLGAPMGSLLMA). A disordered region spans residues 265 to 285 (RIEELLSLPRNPSSPHQQSKH). Residues 274–285 (RNPSSPHQQSKH) are compositionally biased toward polar residues. A Phosphoserine modification is found at S277.

This sequence belongs to the Tim17/Tim22/Tim23 family. As to quaternary structure, associates with the intermediate 315 kDa subcomplex of incompletely assembled complex I. Interacts with TMEM70.

It is found in the mitochondrion membrane. Functionally, chaperone protein involved in the assembly of the mitochondrial NADH:ubiquinone oxidoreductase complex (complex I). Participates in constructing the membrane arm of complex I. In Mus musculus (Mouse), this protein is Complex I assembly factor TIMMDC1, mitochondrial.